We begin with the raw amino-acid sequence, 475 residues long: tRNA-2-methylthio-N(6)-dimethylallyladenosine synthase (475 aa).

Residues 2-119 form the MTTase N-terminal domain; that stretch reads AKLHITTWGC…LPEMINQIRS (118 aa). Cysteine 11, cysteine 48, cysteine 82, cysteine 156, cysteine 160, and cysteine 163 together coordinate [4Fe-4S] cluster. Residues 142-374 enclose the Radical SAM core domain; that stretch reads KAEGPTAFVS…QQRINHQAMQ (233 aa). One can recognise a TRAM domain in the interval 377–440; it reads RLMLGTEQRI…SNSLRGEVIR (64 aa).

The protein belongs to the methylthiotransferase family. MiaB subfamily. In terms of assembly, monomer. [4Fe-4S] cluster serves as cofactor.

Its subcellular location is the cytoplasm. It carries out the reaction N(6)-dimethylallyladenosine(37) in tRNA + (sulfur carrier)-SH + AH2 + 2 S-adenosyl-L-methionine = 2-methylsulfanyl-N(6)-dimethylallyladenosine(37) in tRNA + (sulfur carrier)-H + 5'-deoxyadenosine + L-methionine + A + S-adenosyl-L-homocysteine + 2 H(+). Catalyzes the methylthiolation of N6-(dimethylallyl)adenosine (i(6)A), leading to the formation of 2-methylthio-N6-(dimethylallyl)adenosine (ms(2)i(6)A) at position 37 in tRNAs that read codons beginning with uridine. This chain is tRNA-2-methylthio-N(6)-dimethylallyladenosine synthase, found in Haemophilus ducreyi (strain 35000HP / ATCC 700724).